Here is an 84-residue protein sequence, read N- to C-terminus: Transcription elongation factor 1 homolog (84 aa).

Positions 26, 29, 50, and 53 each coordinate Zn(2+).

It belongs to the ELOF1 family.

The protein localises to the nucleus. Transcription elongation factor implicated in the maintenance of proper chromatin structure in actively transcribed regions. This is Transcription elongation factor 1 homolog from Caenorhabditis elegans.